We begin with the raw amino-acid sequence, 142 residues long: Putative pre-16S rRNA nuclease (142 aa).

Belongs to the YqgF nuclease family.

Its subcellular location is the cytoplasm. In terms of biological role, could be a nuclease involved in processing of the 5'-end of pre-16S rRNA. The protein is Putative pre-16S rRNA nuclease of Staphylococcus saprophyticus subsp. saprophyticus (strain ATCC 15305 / DSM 20229 / NCIMB 8711 / NCTC 7292 / S-41).